We begin with the raw amino-acid sequence, 211 residues long: MRDPVETYMNLVPMVVEQTNRGERAYDIFSRLLKERIIFVTGPVEDNMSMLVVAQLLFLEADNPKKEISMYINSPGGVVTSGLAIYDTMQFIRPPVATLCTGQAASMGSLLLAAGEKDMRHALPNARIMVHQPSGGFQGQATDIMLHAQEILNLKKRLNEIYVKHTGQTYKAIEDALERDKFLTADMARDFGLVDKVIDKRAEEPAAPKAS.

Serine 106 serves as the catalytic Nucleophile. Histidine 131 is an active-site residue.

It belongs to the peptidase S14 family. As to quaternary structure, fourteen ClpP subunits assemble into 2 heptameric rings which stack back to back to give a disk-like structure with a central cavity, resembling the structure of eukaryotic proteasomes.

The protein localises to the cytoplasm. The enzyme catalyses Hydrolysis of proteins to small peptides in the presence of ATP and magnesium. alpha-casein is the usual test substrate. In the absence of ATP, only oligopeptides shorter than five residues are hydrolyzed (such as succinyl-Leu-Tyr-|-NHMec, and Leu-Tyr-Leu-|-Tyr-Trp, in which cleavage of the -Tyr-|-Leu- and -Tyr-|-Trp bonds also occurs).. Cleaves peptides in various proteins in a process that requires ATP hydrolysis. Has a chymotrypsin-like activity. Plays a major role in the degradation of misfolded proteins. This Nitrobacter hamburgensis (strain DSM 10229 / NCIMB 13809 / X14) protein is ATP-dependent Clp protease proteolytic subunit.